A 362-amino-acid chain; its full sequence is Phosphoserine aminotransferase (362 aa).

Residue Arg-42 coordinates L-glutamate. Pyridoxal 5'-phosphate-binding positions include 76-77, Trp-102, Thr-154, Asp-174, and Gln-197; that span reads AR. The residue at position 198 (Lys-198) is an N6-(pyridoxal phosphate)lysine. 239–240 provides a ligand contact to pyridoxal 5'-phosphate; that stretch reads NT.

Belongs to the class-V pyridoxal-phosphate-dependent aminotransferase family. SerC subfamily. In terms of assembly, homodimer. Pyridoxal 5'-phosphate is required as a cofactor.

Its subcellular location is the cytoplasm. It carries out the reaction O-phospho-L-serine + 2-oxoglutarate = 3-phosphooxypyruvate + L-glutamate. The enzyme catalyses 4-(phosphooxy)-L-threonine + 2-oxoglutarate = (R)-3-hydroxy-2-oxo-4-phosphooxybutanoate + L-glutamate. It functions in the pathway amino-acid biosynthesis; L-serine biosynthesis; L-serine from 3-phospho-D-glycerate: step 2/3. Its pathway is cofactor biosynthesis; pyridoxine 5'-phosphate biosynthesis; pyridoxine 5'-phosphate from D-erythrose 4-phosphate: step 3/5. Its function is as follows. Catalyzes the reversible conversion of 3-phosphohydroxypyruvate to phosphoserine and of 3-hydroxy-2-oxo-4-phosphonooxybutanoate to phosphohydroxythreonine. The sequence is that of Phosphoserine aminotransferase from Buchnera aphidicola subsp. Cinara cedri (strain Cc).